The following is a 623-amino-acid chain: MITQAMIENFPPSPGVYLMKSADDTVIYVGKARNLKKRVRSYAGDTRDSRIHIRFMVQLVHSVDYLVTDTEKEALILENTLIKQHRPKYNINLRDDKTYFSLRMDMKEQFPRLSIVRKIPSDGARYFGPYASATAAKEVLKQLYKMFPLRHYPLATCMARKRPCLYHQIKQCSAPCCGLISAAEYAALAHGAALFLEGKNTEVARLYRSKMNLAAEQMRYEDAARYRDLLRAIEVTVERQKMVAQSDDSDVFGLHREADRMQIALLHIRGGTLTGGRSFLFDWELETEEGLASFLNEYYDLDAPIPPQVLIPVPIAEPAALEELLSEKAGKKVTIAVPQRGPKLEMVKLAGKNAETAAQERLARESSSATLLTELAEKLNLPHPPRRIECYDISNIQGEMAVGSRVVFIDGRADKSLYRRYRIKGVLQSDDFAMMREVLSRRFKAESSEEKPDLIVVDGGLGQLGVLNAVLDELEVTGVEAAGLAKSRVARDMESEEIERSDERVFRPGRKNAIALRQSSAPLLLLVRIRDEAHRFAVTYHKDVRSKVLTGSELDGVAGIGEKRKKALLKHFGSLKRVKEATLEELKGAPGMTESAAKALVERLHGSPLPNPPPPGEGAMDRK.

Residues 12-91 (PSPGVYLMKS…IKQHRPKYNI (80 aa)) enclose the GIY-YIG domain. The region spanning 201 to 236 (TEVARLYRSKMNLAAEQMRYEDAARYRDLLRAIEVT) is the UVR domain. The tract at residues 603-623 (RLHGSPLPNPPPPGEGAMDRK) is disordered.

It belongs to the UvrC family. As to quaternary structure, interacts with UvrB in an incision complex.

Its subcellular location is the cytoplasm. The UvrABC repair system catalyzes the recognition and processing of DNA lesions. UvrC both incises the 5' and 3' sides of the lesion. The N-terminal half is responsible for the 3' incision and the C-terminal half is responsible for the 5' incision. The polypeptide is UvrABC system protein C (Citrifermentans bemidjiense (strain ATCC BAA-1014 / DSM 16622 / JCM 12645 / Bem) (Geobacter bemidjiensis)).